The chain runs to 173 residues: Acireductone dioxygenase (173 aa).

A disordered region spans residues Met1 to Gly21. Fe(2+) contacts are provided by His84, His86, Glu90, and His129. The Ni(2+) site is built by His84, His86, Glu90, and His129.

Belongs to the acireductone dioxygenase (ARD) family. It depends on Fe(2+) as a cofactor. The cofactor is Ni(2+).

Its subcellular location is the cytoplasm. It localises to the nucleus. It carries out the reaction 1,2-dihydroxy-5-(methylsulfanyl)pent-1-en-3-one + O2 = 4-methylsulfanyl-2-oxobutanoate + formate + 2 H(+). The enzyme catalyses 1,2-dihydroxy-5-(methylsulfanyl)pent-1-en-3-one + O2 = 3-(methylsulfanyl)propanoate + CO + formate + 2 H(+). It functions in the pathway amino-acid biosynthesis; L-methionine biosynthesis via salvage pathway; L-methionine from S-methyl-5-thio-alpha-D-ribose 1-phosphate: step 5/6. In terms of biological role, catalyzes 2 different reactions between oxygen and the acireductone 1,2-dihydroxy-3-keto-5-methylthiopentene (DHK-MTPene) depending upon the metal bound in the active site. Fe-containing acireductone dioxygenase (Fe-ARD) produces formate and 2-keto-4-methylthiobutyrate (KMTB), the alpha-ketoacid precursor of methionine in the methionine recycle pathway. Ni-containing acireductone dioxygenase (Ni-ARD) produces methylthiopropionate, carbon monoxide and formate, and does not lie on the methionine recycle pathway. This Yarrowia lipolytica (strain CLIB 122 / E 150) (Yeast) protein is Acireductone dioxygenase.